A 304-amino-acid chain; its full sequence is MPYMAMHGLTVALLLIFLAGGTEAFRICAFNAQRLTLSKLAKEPVMDTLVQILARCDIMVLQEVVDSSQKTVSLLLRELNRFDSSRTYSFLNSSLLGRSTYKEKYVYIYRSDKTQILNSYQYNDTNDLFAREPFVAQFALPSKILPSVVLVPLHTTPKDVEKELNALYDVFLDVSQRWQNEDVILLGDFNADCASLTKKRLNSLLLRTEAGFHWVISDGEDTTVRASTNCTYDRIVMHGQGCQTLLRAAAPFNFPRSFQLTEEEALSISDHYPVEVELSQATHNIQLFSLAILLLLSLLPSQLS.

Positions 1–24 are cleaved as a signal peptide; it reads MPYMAMHGLTVALLLIFLAGGTEA. Asparagine 92 carries N-linked (GlcNAc...) asparagine glycosylation. Glutamate 103 is a catalytic residue. The N-linked (GlcNAc...) asparagine glycan is linked to asparagine 123. Histidine 154 is a catalytic residue. Cysteine 193 and cysteine 230 form a disulfide bridge. A glycan (N-linked (GlcNAc...) asparagine) is linked at asparagine 229.

Belongs to the DNase I family.

It localises to the endoplasmic reticulum. The protein is Deoxyribonuclease-1-like 1 (DNASE1L1) of Cricetulus griseus (Chinese hamster).